The chain runs to 530 residues: Rho GTPase-activating protein 36 (530 aa).

The N-terminal stretch at 1–19 (MPPLLLLSALIFLVNVLGG) is a signal peptide. The Rho-GAP domain maps to 209-409 (MSLNPIAKQI…AMIDNWDVLF (201 aa)). The disordered stretch occupies residues 471-512 (GQSKPFDEGSSEEPAVPPGTARSHDDEEGAGNPLILEQDRPL).

In terms of assembly, may interacts (via the Rho-GAP domain) with the active form of RAC1.

GTPase activator for the Rho-type GTPases by converting them to an inactive GDP-bound state. This chain is Rho GTPase-activating protein 36 (ARHGAP36), found in Bos taurus (Bovine).